We begin with the raw amino-acid sequence, 331 residues long: Lactamase-like protein nscB (331 aa).

Residues H106, H108, D110, and H111 each contribute to the Zn(2+) site. D110 serves as the catalytic Proton donor/acceptor.

The protein belongs to the metallo-beta-lactamase superfamily. It depends on Zn(2+) as a cofactor.

It participates in secondary metabolite biosynthesis. Functionally, lactamase-like protein; part of the gene cluster that mediates the biosynthesis of neosartoricin B, a prenylated anthracenone that probably exhibits T-cell antiproliferative activity, suggestive of a physiological role as an immunosuppressive agent. The non-reducing polyketide synthase nscA probably synthesizes and cyclizes the decaketide backbone. The hydrolase nscB then mediates the product release through hydrolysis followed by spontaneous decarboxylation. The prenyltransferase nscD catalyzes the addition of the dimethylallyl group to the aromatic C5. The FAD-dependent monooxygenase nscC is then responsible for the stereospecific hydroxylation at C2. Neosartoricin B can be converted into two additional compounds neosartoricins C and D. Neosartoricin C is a spirocyclic compound that is cyclized through the attack of C3 hydroxyl on C14, followed by dehydration. On the other hand, neosartoricin D is a further cyclized compound in which attack of C2 on C14 in neosartoricin C results in the formation of the acetal-containing dioxabicyclo-octanone ring. Both of these compounds are novel and possibly represent related metabolites of the gene cluster. This is Lactamase-like protein nscB from Trichophyton equinum (strain ATCC MYA-4606 / CBS 127.97) (Horse ringworm fungus).